A 467-amino-acid polypeptide reads, in one-letter code: Putative ankyrin repeat protein R911 (467 aa).

ANK repeat units lie at residues Ile38 to Val70, Thr79 to Ala108, Gly109 to Ala138, Asn140 to Ala168, Asn170 to Ser198, Asp199 to Ser228, Asp229 to Ser258, Asn260 to Val288, Asn289 to Ala318, Asn320 to Ser348, Asn350 to Val378, Glu379 to Ser408, Asn410 to Ala438, and Asp440 to Ser467.

The polypeptide is Putative ankyrin repeat protein R911 (Acanthamoeba polyphaga mimivirus (APMV)).